Reading from the N-terminus, the 264-residue chain is Small ribosomal subunit protein eS4 (264 aa).

The S4 RNA-binding domain maps to 42-104; the sequence is LPLVIIMRNR…TNENFRLLYD (63 aa).

Belongs to the eukaryotic ribosomal protein eS4 family.

It localises to the cytoplasm. The polypeptide is Small ribosomal subunit protein eS4 (RPS4) (Solanum tuberosum (Potato)).